A 194-amino-acid chain; its full sequence is Threonylcarbamoyl-AMP synthase (194 aa).

The 183-residue stretch at 12–194 (SPNMKDLLIQ…DVMTGKLIRE (183 aa)) folds into the YrdC-like domain.

This sequence belongs to the SUA5 family. TsaC subfamily.

Its subcellular location is the cytoplasm. The catalysed reaction is L-threonine + hydrogencarbonate + ATP = L-threonylcarbamoyladenylate + diphosphate + H2O. Functionally, required for the formation of a threonylcarbamoyl group on adenosine at position 37 (t(6)A37) in tRNAs that read codons beginning with adenine. Catalyzes the conversion of L-threonine, HCO(3)(-)/CO(2) and ATP to give threonylcarbamoyl-AMP (TC-AMP) as the acyladenylate intermediate, with the release of diphosphate. This Blochmanniella pennsylvanica (strain BPEN) protein is Threonylcarbamoyl-AMP synthase.